The following is a 337-amino-acid chain: tRNA N6-adenosine threonylcarbamoyltransferase (337 aa).

Histidine 111 and histidine 115 together coordinate Fe cation. Residues 134-138 (LVSGG), aspartate 167, glycine 180, and asparagine 272 each bind substrate. Position 300 (aspartate 300) interacts with Fe cation.

This sequence belongs to the KAE1 / TsaD family. The cofactor is Fe(2+).

The protein localises to the cytoplasm. It carries out the reaction L-threonylcarbamoyladenylate + adenosine(37) in tRNA = N(6)-L-threonylcarbamoyladenosine(37) in tRNA + AMP + H(+). Functionally, required for the formation of a threonylcarbamoyl group on adenosine at position 37 (t(6)A37) in tRNAs that read codons beginning with adenine. Is involved in the transfer of the threonylcarbamoyl moiety of threonylcarbamoyl-AMP (TC-AMP) to the N6 group of A37, together with TsaE and TsaB. TsaD likely plays a direct catalytic role in this reaction. The chain is tRNA N6-adenosine threonylcarbamoyltransferase from Salmonella typhi.